The sequence spans 540 residues: 2-isopropylmalate synthase (540 aa).

Positions 8–273 constitute a Pyruvate carboxyltransferase domain; the sequence is VLIFDTTLRD…FFGRDQDSPT (266 aa). Residues Asp-17, His-208, His-210, and Asn-244 each coordinate Mn(2+). The tract at residues 408-540 is regulatory domain; it reads QLQLVQVSCG…AVVLDARPTL (133 aa).

It belongs to the alpha-IPM synthase/homocitrate synthase family. LeuA type 1 subfamily. Homodimer. Requires Mn(2+) as cofactor.

It is found in the cytoplasm. The enzyme catalyses 3-methyl-2-oxobutanoate + acetyl-CoA + H2O = (2S)-2-isopropylmalate + CoA + H(+). It functions in the pathway amino-acid biosynthesis; L-leucine biosynthesis; L-leucine from 3-methyl-2-oxobutanoate: step 1/4. In terms of biological role, catalyzes the condensation of the acetyl group of acetyl-CoA with 3-methyl-2-oxobutanoate (2-ketoisovalerate) to form 3-carboxy-3-hydroxy-4-methylpentanoate (2-isopropylmalate). This is 2-isopropylmalate synthase from Parasynechococcus marenigrum (strain WH8102).